Reading from the N-terminus, the 369-residue chain is Glutamate 5-kinase (369 aa).

Lys-14 is a binding site for ATP. Ser-54, Asp-141, and Asn-153 together coordinate substrate. Residues 173 to 174 (SD) and 215 to 221 (TGGMVTK) each bind ATP. Residues 277 to 355 (RGRLHLDPGA…SELATALGPA (79 aa)) form the PUA domain.

It belongs to the glutamate 5-kinase family.

Its subcellular location is the cytoplasm. The catalysed reaction is L-glutamate + ATP = L-glutamyl 5-phosphate + ADP. Its pathway is amino-acid biosynthesis; L-proline biosynthesis; L-glutamate 5-semialdehyde from L-glutamate: step 1/2. Functionally, catalyzes the transfer of a phosphate group to glutamate to form L-glutamate 5-phosphate. The sequence is that of Glutamate 5-kinase from Salinispora arenicola (strain CNS-205).